The chain runs to 245 residues: Small ribosomal subunit protein uS2 (245 aa).

The protein belongs to the universal ribosomal protein uS2 family.

In Dehalococcoides mccartyi (strain ATCC BAA-2266 / KCTC 15142 / 195) (Dehalococcoides ethenogenes (strain 195)), this protein is Small ribosomal subunit protein uS2.